The sequence spans 779 residues: MINQENNDLYDLNEALQVENLTLNDYEEICKRLKKKPNRTELGMFGVMWSEHCCYRNSKPLLSKFPTKGKNVLVGPGENAGVIDVGNNQKLVFKIESHNHPSAIEPFQGAATGVGGILRDIFTMGARPIAVLNSLRFGNLDKSSNVDLLRGVVSGIAHYGNCVGVPTVGGEIDFDDSYSGNPLVNVMALGLLETEEIVCSGAKNVGSPVLYVGNTTGRDGVGGASFASSELTTTSLDDRPAVQVGDPFVEKSLIEACLDAFKTGDVIAAQDMGAAGLTCSSAEMAANGNLGISIDLDLVPSREDDMSSYQYLLSESQERMLFVVKEEKINDLIEKFNKWGLYASVIGEVIGTNEVIISHKGKIVAQIPTSALSDDTPVNFHNVINNPPDDLLNKWEWKENDLPEIHEQKIFSLKENKKFSFQEIILKLLSNPSIASKRWIYKQYDSQVQANTVFKPGKSDAAVVRLREQYKKNKSKVFSGVAASVDCNSRWVALDPFRGSIAAVAESARNVSCVGAEPVAITNNLNFSSPESEIGYWQLSSSCNGITEACKALETPVTGGNVSLYNESKNKDNLITPINPTPVIGMVGKIDNIEKAISCEWKNIDDQIWLIGSYKSDTTIAASSYLEYFHGEITGRPPKIDLLDEKFCQSFLRNAILNSLVVSSHDISDGGLAIALAESCILSAKGATIELKKDINREDNLLFAEGGSRIIFSINKIKQNEWLNYLKQNQINFPSSVYVKKIGHVSSETLKINIQDKNICNIRVEELSEKFNNSISDYF.

His-52 is an active-site residue. Residues Tyr-55 and Lys-94 each coordinate ATP. Glu-96 lines the Mg(2+) pocket. Substrate is bound by residues 97 to 100 (SHNH) and Arg-119. The Proton acceptor role is filled by His-98. Asp-120 contacts Mg(2+). Position 243 (Gln-243) interacts with substrate. Asp-271 serves as a coordination point for Mg(2+). 315 to 317 (ESQ) contributes to the substrate binding site. Positions 523 and 560 each coordinate ATP. Position 561 (Asn-561) interacts with Mg(2+). Residue Ser-563 participates in substrate binding.

This sequence belongs to the FGAMS family. In terms of assembly, monomer. Part of the FGAM synthase complex composed of 1 PurL, 1 PurQ and 2 PurS subunits.

It is found in the cytoplasm. It carries out the reaction N(2)-formyl-N(1)-(5-phospho-beta-D-ribosyl)glycinamide + L-glutamine + ATP + H2O = 2-formamido-N(1)-(5-O-phospho-beta-D-ribosyl)acetamidine + L-glutamate + ADP + phosphate + H(+). The protein operates within purine metabolism; IMP biosynthesis via de novo pathway; 5-amino-1-(5-phospho-D-ribosyl)imidazole from N(2)-formyl-N(1)-(5-phospho-D-ribosyl)glycinamide: step 1/2. Its function is as follows. Part of the phosphoribosylformylglycinamidine synthase complex involved in the purines biosynthetic pathway. Catalyzes the ATP-dependent conversion of formylglycinamide ribonucleotide (FGAR) and glutamine to yield formylglycinamidine ribonucleotide (FGAM) and glutamate. The FGAM synthase complex is composed of three subunits. PurQ produces an ammonia molecule by converting glutamine to glutamate. PurL transfers the ammonia molecule to FGAR to form FGAM in an ATP-dependent manner. PurS interacts with PurQ and PurL and is thought to assist in the transfer of the ammonia molecule from PurQ to PurL. The sequence is that of Phosphoribosylformylglycinamidine synthase subunit PurL from Prochlorococcus marinus (strain MIT 9301).